A 358-amino-acid chain; its full sequence is Holliday junction branch migration complex subunit RuvB (358 aa).

The tract at residues 1 to 24 is disordered; it reads MSIQTDDFAAPPPKRILSGAPASP. The interval 5–194 is large ATPase domain (RuvB-L); it reads TDDFAAPPPK…FGIVARLEFY (190 aa). ATP contacts are provided by residues Leu-33, Arg-34, Gly-75, Lys-78, Thr-79, Thr-80, 141–143, Arg-184, Tyr-194, and Arg-231; that span reads EDY. Thr-79 serves as a coordination point for Mg(2+). The interval 195–265 is small ATPAse domain (RuvB-S); the sequence is SPEELASIVR…IAHRALVMLD (71 aa). Residues 268–358 are head domain (RuvB-H); sequence PQGFDLMDRK…GDMFGAMRPE (91 aa). DNA is bound by residues Arg-304, Arg-323, and Arg-328.

Belongs to the RuvB family. As to quaternary structure, homohexamer. Forms an RuvA(8)-RuvB(12)-Holliday junction (HJ) complex. HJ DNA is sandwiched between 2 RuvA tetramers; dsDNA enters through RuvA and exits via RuvB. An RuvB hexamer assembles on each DNA strand where it exits the tetramer. Each RuvB hexamer is contacted by two RuvA subunits (via domain III) on 2 adjacent RuvB subunits; this complex drives branch migration. In the full resolvosome a probable DNA-RuvA(4)-RuvB(12)-RuvC(2) complex forms which resolves the HJ.

The protein resides in the cytoplasm. It carries out the reaction ATP + H2O = ADP + phosphate + H(+). Functionally, the RuvA-RuvB-RuvC complex processes Holliday junction (HJ) DNA during genetic recombination and DNA repair, while the RuvA-RuvB complex plays an important role in the rescue of blocked DNA replication forks via replication fork reversal (RFR). RuvA specifically binds to HJ cruciform DNA, conferring on it an open structure. The RuvB hexamer acts as an ATP-dependent pump, pulling dsDNA into and through the RuvAB complex. RuvB forms 2 homohexamers on either side of HJ DNA bound by 1 or 2 RuvA tetramers; 4 subunits per hexamer contact DNA at a time. Coordinated motions by a converter formed by DNA-disengaged RuvB subunits stimulates ATP hydrolysis and nucleotide exchange. Immobilization of the converter enables RuvB to convert the ATP-contained energy into a lever motion, pulling 2 nucleotides of DNA out of the RuvA tetramer per ATP hydrolyzed, thus driving DNA branch migration. The RuvB motors rotate together with the DNA substrate, which together with the progressing nucleotide cycle form the mechanistic basis for DNA recombination by continuous HJ branch migration. Branch migration allows RuvC to scan DNA until it finds its consensus sequence, where it cleaves and resolves cruciform DNA. This chain is Holliday junction branch migration complex subunit RuvB, found in Albidiferax ferrireducens (strain ATCC BAA-621 / DSM 15236 / T118) (Rhodoferax ferrireducens).